We begin with the raw amino-acid sequence, 164 residues long: Crossover junction endodeoxyribonuclease RuvC (164 aa).

Active-site residues include aspartate 7, glutamate 67, and aspartate 139. Mg(2+) contacts are provided by aspartate 7, glutamate 67, and aspartate 139.

It belongs to the RuvC family. Homodimer which binds Holliday junction (HJ) DNA. The HJ becomes 2-fold symmetrical on binding to RuvC with unstacked arms; it has a different conformation from HJ DNA in complex with RuvA. In the full resolvosome a probable DNA-RuvA(4)-RuvB(12)-RuvC(2) complex forms which resolves the HJ. Requires Mg(2+) as cofactor.

The protein localises to the cytoplasm. The enzyme catalyses Endonucleolytic cleavage at a junction such as a reciprocal single-stranded crossover between two homologous DNA duplexes (Holliday junction).. Its function is as follows. The RuvA-RuvB-RuvC complex processes Holliday junction (HJ) DNA during genetic recombination and DNA repair. Endonuclease that resolves HJ intermediates. Cleaves cruciform DNA by making single-stranded nicks across the HJ at symmetrical positions within the homologous arms, yielding a 5'-phosphate and a 3'-hydroxyl group; requires a central core of homology in the junction. The consensus cleavage sequence is 5'-(A/T)TT(C/G)-3'. Cleavage occurs on the 3'-side of the TT dinucleotide at the point of strand exchange. HJ branch migration catalyzed by RuvA-RuvB allows RuvC to scan DNA until it finds its consensus sequence, where it cleaves and resolves the cruciform DNA. The chain is Crossover junction endodeoxyribonuclease RuvC from Geobacter sp. (strain M21).